The sequence spans 2101 residues: MDALESLLDEVALEGLDGLCLPALWSRLESRSPAFPLPLEPYTQEFLWRALATHPGISFYEEPRERPDLQLQDRYEEIDLETGILESRRDPVTLEDVYPIHMILENKDGIQGSCRYFKERKDITSSIRSKCLQPRCTMVEAFSRWGKKLIIVASQDMRYRALIGLEGDPDLKLPDFSYCILERLGRSRWQGELQRDLHTTAFKVDAGKLHYHRKILNKNGLITMQSHVIRLPTGAQQHSILLLLNRFHVDRRSKYDILMEKLSMMLSTRSNQIETLGKLREELGLCERTFKRLYQYMLNAGLAKVVSLPLQEIHPECGPCKTKKGTDVMVRCLKLLKEFKRKMEDDHDDDDDEEVISKGVPPVDIVFERDMLTQTYELIERRGTKGISQAEIRVAMNVGKLEARMLCRLLQRFKVVKGFMEDEGRQRTTKYISCVFAEESDLSRQYAREKARGELLTTVSLASVQDESLMPEGEEAFLSDSESEEESSCSGGKRRGRGSRGHARASGDAGSGSRPHHSTPAKGGWKVLNLHPLKKPKAAAEERSRRSSACRDGLDTSSSSELNAPFDPHSMDSHSGDIAVIEEVRLDNPKEGGGSQKGGRHGSSQDKPHKTYRLLKRRNLIIEAVTNLRLIESLFTIQKMIMDQEKQEGVSTKCCKKSIIRLVRNLSEEGLLRLYRTTVIQDGIKKKVDLVVHPSMDQNDPLVRSAIEQVRFRISNSSTANRVKVPPAPAPQEEAEEENQEPEVPSRSANSDPNTSSKPESTRVKKTDEKMGITPLKNYKPVIVPGLGRSIGFLPKMPRLKAMHLFLWYLVYGHPAGHTGEQPALHSERKTGKQESSRPGAQPSSGDDWDTSEAKNNTESSSWESEMELSTEIVYVDEISWMRYVPPIPIHRDFGFGWALVSDILLCLPLSIFVQLVQVSYKVDNLEDFLNDPLKKHTLIRFLPRHIRQQLLYKRRYIFSVVENLQRLCYMGLLQFGPTEKFQDKDQVFVFLKKNAVIVDTTICDPHYNLAHSSRPFERRLYVLDSMQDVECYWFDLQCICLNTPLGVVRCPCAQKICPDPGSDPEGSLRKEQESAMDKHNLERKCAMLEYTTGSREVVDEGLVPGDGLGAAGLDSSFYAHLKRNWVWTSYIINKARKNNTSENGLTGRLQTFLSKRPMPLGSGGSGRLPLWSEGRADAELCADKEEQFELDREPTPGRNRKVRGGKSQKRKRLKKEPIRKTKRRRRGEHPEAKSKKLRYQDEADQNALRMMTRLRVSWSMQEDGLLMLCRIASNVLNTKVKGPFVTWQVVRDILHATFEESLDKTSHSVGRRARYIVKNPQAFMNYKVCLAEVYQDKALVGDFMSRKGNYEDPKVCAKEFKEFVEKLKEKFSSGLRNPNLEIPNTLQELFAKYRVLAIGDEKDRVRKEDELNSVEDIHFLVLQNLIQSTLSLSNSQSNSCQSFQIFRLYREFREPVLVRAFMECQKRSLVNRRRVSHSQGPKKNRAVPFVPMSYQLSQSYYKLFTWRFPTTICTESFQFYDRLRTNGMLDQPDHFSFKDLDSSDPSNDLVAFSLDSPGGHCVTALALFSLGLLSVDVRIPEQIVVVDSSMVESEVMKSLGKDGGLDDDEEEEDLDEGSGTKRQGVEVKAHQASHTKYLLMRGYYTVPGMVSTRNLNPNDSIVVNSCQVKFRLRNTPASTQLGPTGFTATPLEELQAGLSCLPASFTSLVDPQLRTHCPEEFAHQMAQSGYSPEDVAASLEILQAVAAADCFGIDKEKLSRQFSALEKIADRRTRTFLDYIQDLLEQEQVMEVGGNTVRLVTMASAQPWLLHSMRLRDMEVDTKASGDDSQSRLPEGPSIEDHTSEGAAVPPVSSHSTKKRPHCPETDAEEATRLPAKKPTLQDVRVAASPRPGAEEQAEAQAPAQLAAPEDADAGGPRQENQENVGVSGLEQLGCEFQLPEGSEDPRGLTESNMAQAAWESGCERVCFVGRPWRGVDGHLNMPVCKGMLEAVLYHIMSRPGVPESCLLQYYQGVLQPVAVLELLRGLESLGCIQKRTLRKPASVSLFSRPVVEGLGQASEAEALSCHESTVTFYEPTLDCTIRLGRVFPHDINWNKWIHL.

A compositionally biased stretch (acidic residues) spans 473 to 487 (GEEAFLSDSESEEES). Disordered regions lie at residues 473–574 (GEEA…MDSH) and 588–609 (NPKEGGGSQKGGRHGSSQDKPH). The span at 492–503 (GKRRGRGSRGHA) shows a compositional bias: basic residues. A compositionally biased stretch (low complexity) spans 504–513 (RASGDAGSGS). Lysine 534 is covalently cross-linked (Glycyl lysine isopeptide (Lys-Gly) (interchain with G-Cter in SUMO2)). Serine 667 carries the phosphoserine modification. 2 disordered regions span residues 718–772 (STAN…EKMG) and 820–864 (GEQP…SSWE). The span at 747–759 (RSANSDPNTSSKP) shows a compositional bias: polar residues. Composition is skewed to basic and acidic residues over residues 760-771 (ESTRVKKTDEKM) and 826-836 (HSERKTGKQES). Glycyl lysine isopeptide (Lys-Gly) (interchain with G-Cter in SUMO2) cross-links involve residues lysine 770 and lysine 833. At serine 1063 the chain carries Phosphoserine. The segment covering 1186–1196 (EEQFELDREPT) has biased composition (basic and acidic residues). Disordered regions lie at residues 1186 to 1239 (EEQF…KKLR), 1598 to 1627 (KSLGKDGGLDDDEEEEDLDEGSGTKRQGVE), and 1822 to 1923 (DTKA…QENQ). The residue at position 1196 (threonine 1196) is a Phosphothreonine. A compositionally biased stretch (basic residues) spans 1199-1215 (RNRKVRGGKSQKRKRLK). Residues 1229–1239 (EHPEAKSKKLR) are compositionally biased toward basic and acidic residues. The segment covering 1606–1617 (LDDDEEEEDLDE) has biased composition (acidic residues). Residues 1822-1831 (DTKASGDDSQ) are compositionally biased toward basic and acidic residues. Serine 1854 and serine 1890 each carry phosphoserine. The span at 1900–1910 (EAQAPAQLAAP) shows a compositional bias: low complexity.

It belongs to the TFIIIC subunit 1 family. As to quaternary structure, part of the TFIIIC subcomplex TFIIIC2, consisting of six subunits, GTF3C1, GTF3C2, GTF3C3, GTF3C4, GTF3C5 and GTF3C6. Interacts with IGHMBP2. Interacts with MAF1.

Its subcellular location is the nucleus. In terms of biological role, required for RNA polymerase III-mediated transcription. Component of TFIIIC that initiates transcription complex assembly on tRNA and is required for transcription of 5S rRNA and other stable nuclear and cytoplasmic RNAs. Binds to the box B promoter element. This is General transcription factor 3C polypeptide 1 (Gtf3c1) from Mus musculus (Mouse).